The primary structure comprises 283 residues: Thymidylate synthase (283 aa).

Arg-22 contributes to the dUMP binding site. Cys-160 acts as the Nucleophile in catalysis. DUMP-binding positions include 180–183 (RSCD), Asn-191, and 221–223 (HIY). Asp-183 provides a ligand contact to (6R)-5,10-methylene-5,6,7,8-tetrahydrofolate. Ser-282 serves as a coordination point for (6R)-5,10-methylene-5,6,7,8-tetrahydrofolate.

This sequence belongs to the thymidylate synthase family. Bacterial-type ThyA subfamily. As to quaternary structure, homodimer.

The protein localises to the cytoplasm. The catalysed reaction is dUMP + (6R)-5,10-methylene-5,6,7,8-tetrahydrofolate = 7,8-dihydrofolate + dTMP. It participates in pyrimidine metabolism; dTTP biosynthesis. Its function is as follows. Catalyzes the reductive methylation of 2'-deoxyuridine-5'-monophosphate (dUMP) to 2'-deoxythymidine-5'-monophosphate (dTMP) while utilizing 5,10-methylenetetrahydrofolate (mTHF) as the methyl donor and reductant in the reaction, yielding dihydrofolate (DHF) as a by-product. This enzymatic reaction provides an intracellular de novo source of dTMP, an essential precursor for DNA biosynthesis. The polypeptide is Thymidylate synthase (Actinobacillus succinogenes (strain ATCC 55618 / DSM 22257 / CCUG 43843 / 130Z)).